The following is a 276-amino-acid chain: NAD-capped RNA hydrolase NudC (276 aa).

R82 contributes to the substrate binding site. C112 and C115 together coordinate Zn(2+). Residue E125 coordinates substrate. 2 residues coordinate Zn(2+): C130 and C133. Substrate is bound at residue Y138. Positions P139–Y262 constitute a Nudix hydrolase domain. A divalent metal cation contacts are provided by A172, E188, and E192. Positions G173 to A194 match the Nudix box motif. Position 206 to 213 (Q206 to S213) interacts with substrate. An a divalent metal cation-binding site is contributed by E233. A255 contacts substrate.

The protein belongs to the Nudix hydrolase family. NudC subfamily. As to quaternary structure, homodimer. Requires Mg(2+) as cofactor. Mn(2+) is required as a cofactor. It depends on Zn(2+) as a cofactor.

The enzyme catalyses a 5'-end NAD(+)-phospho-ribonucleoside in mRNA + H2O = a 5'-end phospho-adenosine-phospho-ribonucleoside in mRNA + beta-nicotinamide D-ribonucleotide + 2 H(+). It carries out the reaction NAD(+) + H2O = beta-nicotinamide D-ribonucleotide + AMP + 2 H(+). It catalyses the reaction NADH + H2O = reduced beta-nicotinamide D-ribonucleotide + AMP + 2 H(+). Its function is as follows. mRNA decapping enzyme that specifically removes the nicotinamide adenine dinucleotide (NAD) cap from a subset of mRNAs by hydrolyzing the diphosphate linkage to produce nicotinamide mononucleotide (NMN) and 5' monophosphate mRNA. The NAD-cap is present at the 5'-end of some mRNAs and stabilizes RNA against 5'-processing. Has preference for mRNAs with a 5'-end purine. Catalyzes the hydrolysis of a broad range of dinucleotide pyrophosphates. In Pseudomonas entomophila (strain L48), this protein is NAD-capped RNA hydrolase NudC.